Consider the following 299-residue polypeptide: Ankyrin repeat domain-containing protein 54 (299 aa).

A disordered region spans residues 1-27 (MAATGGGADDESRSGRSSSDGECAVAP). Position 2 is an N-acetylalanine (A2). S62 is subject to Phosphoserine. A Nuclear localization signal (NLS) motif is present at residues 98 to 116 (RRLGPTGKEVHALKRLRDS). 4 ANK repeats span residues 108-137 (HALK…DPCA), 141-170 (KGRT…DPNQ), 174-203 (LGNT…RVDA), and 207-239 (AGRT…EVKQ). The segment at 140 to 240 (DKGRTALHFA…EAVRLEVKQI (101 aa)) is LYN-binding. Positions 282-292 (LLASFTSLSLQ) match the Nuclear export signal (NES) motif.

As to quaternary structure, interacts (via ankyrin repeat region) with LYN (via SH3-domain) in an activation-independent status of LYN. Forms a multiprotein complex with LYN and HCLS1. Interacts with TSN2, VAV1, DBNL and LASP1. Expressed in a variety of hemopoietic cell lines and tissue with high levels in testis. Highly expressed in ciliated cells.

The protein resides in the nucleus. It is found in the cytoplasm. The protein localises to the midbody. Functionally, plays an important role in regulating intracellular signaling events associated with erythroid terminal differentiation. This is Ankyrin repeat domain-containing protein 54 (Ankrd54) from Mus musculus (Mouse).